Consider the following 442-residue polypeptide: tRNA modification GTPase MnmE (442 aa).

Arg-27, Glu-84, and Lys-124 together coordinate (6S)-5-formyl-5,6,7,8-tetrahydrofolate. One can recognise a TrmE-type G domain in the interval 221-366 (GLHVVIVGAP…LLTNLQNFAE (146 aa)). Residues 231–236 (NAGKSS), 250–256 (SEEAGTT), and 275–278 (DTAG) contribute to the GTP site. Mg(2+)-binding residues include Ser-235 and Thr-256. Residue Lys-442 participates in (6S)-5-formyl-5,6,7,8-tetrahydrofolate binding.

It belongs to the TRAFAC class TrmE-Era-EngA-EngB-Septin-like GTPase superfamily. TrmE GTPase family. As to quaternary structure, homodimer. Heterotetramer of two MnmE and two MnmG subunits. K(+) is required as a cofactor.

Its subcellular location is the cytoplasm. Functionally, exhibits a very high intrinsic GTPase hydrolysis rate. Involved in the addition of a carboxymethylaminomethyl (cmnm) group at the wobble position (U34) of certain tRNAs, forming tRNA-cmnm(5)s(2)U34. The chain is tRNA modification GTPase MnmE from Brucella anthropi (strain ATCC 49188 / DSM 6882 / CCUG 24695 / JCM 21032 / LMG 3331 / NBRC 15819 / NCTC 12168 / Alc 37) (Ochrobactrum anthropi).